Consider the following 189-residue polypeptide: UPF0301 protein RF_0044 (189 aa).

Belongs to the UPF0301 (AlgH) family.

This Rickettsia felis (strain ATCC VR-1525 / URRWXCal2) (Rickettsia azadi) protein is UPF0301 protein RF_0044.